Consider the following 1577-residue polypeptide: Disco-interacting protein 2 homolog B-A (1577 aa).

One can recognise a DMAP1-binding domain in the interval 7-124 (DLAALPKEVR…PMPTKRRSAF (118 aa)). 4 disordered regions span residues 109–148 (EEKMALPMPTKRRSAFVQSPAENCTPPDTSSASEDEGSLR), 173–204 (VQGSSTSSSASSTLSHGDGKTHNHNNHSQGQT), 217–239 (DTNSSSGSVPPDVTSTAPQDRNS), and 253–273 (SRGQSRSSMMDTAGGVPAHSR). Polar residues predominate over residues 124-140 (FVQSPAENCTPPDTSSA). Low complexity predominate over residues 176-187 (SSTSSSASSTLS). Positions 217-236 (DTNSSSGSVPPDVTSTAPQD) are enriched in polar residues.

This sequence belongs to the DIP2 family.

The protein localises to the cell projection. It is found in the dendrite. The protein resides in the axon. Its subcellular location is the perikaryon. Negatively regulates axonal outgrowth and is essential for normal synaptic transmission. Not required for regulation of axon polarity. Promotes acetylation of alpha-tubulin. The polypeptide is Disco-interacting protein 2 homolog B-A (dip2ba) (Danio rerio (Zebrafish)).